The following is a 261-amino-acid chain: Glucose 1-dehydrogenase A (261 aa).

An NADP(+)-binding site is contributed by 11–35 (VITGGSTGLGRAMAVRFGQEEAKVV). A substrate-binding site is contributed by serine 145. The active-site Proton acceptor is the tyrosine 158.

The protein belongs to the short-chain dehydrogenases/reductases (SDR) family. In terms of assembly, homotetramer.

The enzyme catalyses D-glucose + NAD(+) = D-glucono-1,5-lactone + NADH + H(+). The catalysed reaction is D-glucose + NADP(+) = D-glucono-1,5-lactone + NADPH + H(+). The sequence is that of Glucose 1-dehydrogenase A (gdhA) from Priestia megaterium (Bacillus megaterium).